Consider the following 241-residue polypeptide: Large ribosomal subunit protein uL30 (241 aa).

The segment at 1–32 (MATTLKPETLQKKEKAQQKTAEERAAAKKVRK) is disordered. The span at 9–26 (TLQKKEKAQQKTAEERAA) shows a compositional bias: basic and acidic residues.

This sequence belongs to the universal ribosomal protein uL30 family. In terms of assembly, component of the large ribosomal subunit. Mature ribosomes consist of a small (40S) and a large (60S) subunit. The 40S subunit contains about 32 different proteins and 1 molecule of RNA (18S). The 60S subunit contains 45 different proteins and 3 molecules of RNA (25S, 5.8S and 5S).

It localises to the cytoplasm. Its function is as follows. Component of the ribosome, a large ribonucleoprotein complex responsible for the synthesis of proteins in the cell. The small ribosomal subunit (SSU) binds messenger RNAs (mRNAs) and translates the encoded message by selecting cognate aminoacyl-transfer RNA (tRNA) molecules. The large subunit (LSU) contains the ribosomal catalytic site termed the peptidyl transferase center (PTC), which catalyzes the formation of peptide bonds, thereby polymerizing the amino acids delivered by tRNAs into a polypeptide chain. The nascent polypeptides leave the ribosome through a tunnel in the LSU and interact with protein factors that function in enzymatic processing, targeting, and the membrane insertion of nascent chains at the exit of the ribosomal tunnel. The polypeptide is Large ribosomal subunit protein uL30 (Candida albicans (strain SC5314 / ATCC MYA-2876) (Yeast)).